The sequence spans 377 residues: Mitogen-activated protein kinase mpkC (377 aa).

The 280-residue stretch at 20–299 (YVNPQPIGMG…AQDALRHPYL (280 aa)) folds into the Protein kinase domain. ATP contacts are provided by residues 26-34 (IGMGSFGLV) and K49. Catalysis depends on D141, which acts as the Proton acceptor. Residue T171 is modified to Phosphothreonine. A TXY motif is present at residues 171–173 (TGY). Y173 carries the post-translational modification Phosphotyrosine.

The protein belongs to the protein kinase superfamily. Ser/Thr protein kinase family. MAP kinase subfamily. HOG1 sub-subfamily. Mg(2+) serves as cofactor. Dually phosphorylated on Thr-171 and Tyr-173, which activates the enzyme.

It catalyses the reaction L-seryl-[protein] + ATP = O-phospho-L-seryl-[protein] + ADP + H(+). The enzyme catalyses L-threonyl-[protein] + ATP = O-phospho-L-threonyl-[protein] + ADP + H(+). Activated by tyrosine and threonine phosphorylation. In terms of biological role, mitogen-activated protein kinase required for growth on media where sorbitol or mannitol is the sole carbon source. This chain is Mitogen-activated protein kinase mpkC (mpkc), found in Neosartorya fischeri (strain ATCC 1020 / DSM 3700 / CBS 544.65 / FGSC A1164 / JCM 1740 / NRRL 181 / WB 181) (Aspergillus fischerianus).